The chain runs to 250 residues: Hydroxyacylglutathione hydrolase (250 aa).

Residues His52, His54, Asp56, His57, His107, Asp128, and His166 each contribute to the Zn(2+) site.

This sequence belongs to the metallo-beta-lactamase superfamily. Glyoxalase II family. Monomer. Zn(2+) is required as a cofactor.

It carries out the reaction an S-(2-hydroxyacyl)glutathione + H2O = a 2-hydroxy carboxylate + glutathione + H(+). It participates in secondary metabolite metabolism; methylglyoxal degradation; (R)-lactate from methylglyoxal: step 2/2. In terms of biological role, thiolesterase that catalyzes the hydrolysis of S-D-lactoyl-glutathione to form glutathione and D-lactic acid. This Neisseria gonorrhoeae (strain NCCP11945) protein is Hydroxyacylglutathione hydrolase.